The chain runs to 276 residues: Bis(5'-nucleosyl)-tetraphosphatase, symmetrical (276 aa).

This sequence belongs to the Ap4A hydrolase family.

It carries out the reaction P(1),P(4)-bis(5'-adenosyl) tetraphosphate + H2O = 2 ADP + 2 H(+). Hydrolyzes diadenosine 5',5'''-P1,P4-tetraphosphate to yield ADP. The polypeptide is Bis(5'-nucleosyl)-tetraphosphatase, symmetrical (Legionella pneumophila subsp. pneumophila (strain Philadelphia 1 / ATCC 33152 / DSM 7513)).